Here is a 724-residue protein sequence, read N- to C-terminus: ATPase family protein 2 homolog (724 aa).

ATP-binding positions include 281–287 (PGSGKTL) and 503–508 (GCSKTL).

Belongs to the AAA ATPase family. AFG2 subfamily. Homohexamer; ATP binding induces oligomerization. Forms a ring-shaped particle of about 12 nm diameter, that displays 6-fold radial symmetry. Interacts (via N-terminus) with kinase air-2; the interaction is direct and inhibits air-2 kinase activity in an ATPase-dependent manner.

It is found in the cytoplasm. The enzyme catalyses ATP + H2O = ADP + phosphate + H(+). ATP-dependent chaperone which uses the energy provided by ATP hydrolysis to generate mechanical force to disassemble protein complexes. Required for various steps of embryonic mitosis including centrosome duplication, spindle assembly, ER dynamics and cell cycle progression. Regulates the stability and activity of kinase air-2, a component of the chromosomal passenger complex (CPC). Inhibits air-2 kinase activity from metaphase to late telophase and negatively regulates air-2 stability during mitotic exit. Controls ER transition into sheet-like structures at the onset of mitosis, possibly by regulating homotypic membrane fusion. This chain is ATPase family protein 2 homolog, found in Caenorhabditis elegans.